Reading from the N-terminus, the 72-residue chain is Delta-actitoxin-Avd2b 3 (72 aa).

An N-terminal signal peptide occupies residues 1–21 (MMSRLLVFLMLGAAFMLVVSA). A propeptide spanning residues 22-42 (NDAYGDEPAFKDLNQGDESLG) is cleaved from the precursor. Disulfide bonds link C47-C62, C48-C56, and C50-C67.

It belongs to the sea anemone short toxin (type III) family.

It localises to the secreted. It is found in the nematocyst. Functionally, voltage-gated sodium channel (Nav) inhibitor. 1 uM completely inhibits insect voltage-gated sodium channel inactivation (DmNav1 from D.melanogaster). This is Delta-actitoxin-Avd2b 3 from Anemonia viridis (Snakelocks anemone).